Here is a 65-residue protein sequence, read N- to C-terminus: MKLKITLTKSLIACRFNQIKTAHCLGLKKINNQVIKDDTPAIHGMIKTISHLVVVEKVSYTKEQK.

Belongs to the universal ribosomal protein uL30 family. In terms of assembly, part of the 50S ribosomal subunit.

The sequence is that of Large ribosomal subunit protein uL30 from Aster yellows witches'-broom phytoplasma (strain AYWB).